A 466-amino-acid polypeptide reads, in one-letter code: Oxysterol-binding protein 4 (466 aa).

Over residues 1-12 (MEIGTSSTTNNI) the composition is skewed to polar residues. The segment at 1-67 (MEIGTSSTTN…STSPPSPPIE (67 aa)) is disordered. A compositionally biased stretch (low complexity) spans 24-45 (NNNNHNNNSSNNSSNNNSISSS). Positions 46–60 (PTDSSQLMNGEQSTS) are enriched in polar residues.

Belongs to the OSBP family.

This chain is Oxysterol-binding protein 4 (osbD), found in Dictyostelium discoideum (Social amoeba).